The primary structure comprises 682 residues: Potassium-transporting ATPase ATP-binding subunit (682 aa).

The next 4 helical transmembrane spans lie at 34-54 (PVMFIVWIGSLLTTCISIAMA), 62-82 (ALFSAAISGWLWITVLFANFA), 219-239 (IALTILLIALTIVFLLATATL), and 254-274 (VLVALLVCLIPTTIGGLLSAI). D307 serves as the catalytic 4-aspartylphosphate intermediate. ATP is bound by residues D344, E348, 377–384 (FTAQSRMS), and K395. Residues D518 and D522 each contribute to the Mg(2+) site. The next 3 helical transmembrane spans lie at 588 to 608 (FAIIPAAFAATYPQLNALNIM), 616 to 636 (AILSAVIFNALIIVFLIPLAL), and 656 to 676 (IYGLGGLLVPFIGIKVIDLLL).

The protein belongs to the cation transport ATPase (P-type) (TC 3.A.3) family. Type IA subfamily. In terms of assembly, the system is composed of three essential subunits: KdpA, KdpB and KdpC.

Its subcellular location is the cell inner membrane. It carries out the reaction K(+)(out) + ATP + H2O = K(+)(in) + ADP + phosphate + H(+). Functionally, part of the high-affinity ATP-driven potassium transport (or Kdp) system, which catalyzes the hydrolysis of ATP coupled with the electrogenic transport of potassium into the cytoplasm. This subunit is responsible for energy coupling to the transport system and for the release of the potassium ions to the cytoplasm. The chain is Potassium-transporting ATPase ATP-binding subunit from Escherichia coli O9:H4 (strain HS).